A 500-amino-acid chain; its full sequence is Trehalose-6-phosphate synthase (500 aa).

Arginine 28 lines the D-glucose 6-phosphate pocket. UDP-alpha-D-glucose is bound at residue 48–49; it reads GG. D-glucose 6-phosphate-binding residues include tyrosine 108 and aspartate 162. The UDP-alpha-D-glucose site is built by arginine 304 and lysine 309. Arginine 342 serves as a coordination point for D-glucose 6-phosphate. Position 407 to 411 (407 to 411) interacts with UDP-alpha-D-glucose; the sequence is LVAKE.

Belongs to the glycosyltransferase 20 family. As to quaternary structure, homotetramer.

It catalyses the reaction ADP-alpha-D-glucose + D-glucose 6-phosphate = alpha,alpha-trehalose 6-phosphate + ADP + H(+). The catalysed reaction is CDP-alpha-D-glucose + D-glucose 6-phosphate = alpha,alpha-trehalose 6-phosphate + CDP + H(+). The enzyme catalyses GDP-alpha-D-glucose + D-glucose 6-phosphate = alpha,alpha-trehalose 6-phosphate + GDP + H(+). It carries out the reaction TDP-alpha-D-glucose + D-glucose 6-phosphate = 5-methyl-UDP + alpha,alpha-trehalose 6-phosphate + H(+). It catalyses the reaction D-glucose 6-phosphate + UDP-alpha-D-glucose = alpha,alpha-trehalose 6-phosphate + UDP + H(+). It participates in glycan biosynthesis; trehalose biosynthesis. Functionally, probably involved in the osmoprotection via the biosynthesis of trehalose and in the production of glycogen and alpha-glucan via the TreS-Pep2 branch involved in the biosynthesis of maltose-1-phosphate (M1P). Catalyzes the transfer of glucose from UDP-glucose (UDP-Glc) to D-glucose 6-phosphate (Glc-6-P) to form trehalose-6-phosphate. Probably also able to use ADP-Glc, CDP-Glc, GDP-Glc and TDP-Glc as glucosyl donors. This chain is Trehalose-6-phosphate synthase, found in Mycobacterium bovis (strain ATCC BAA-935 / AF2122/97).